Reading from the N-terminus, the 529-residue chain is Listeriolysin O (529 aa).

The signal sequence occupies residues 1-24 (MKKIMLVFITLILVSLPIAQQTEA). Residues 35 to 54 (SISSMAPPASPPASPKTPIE) form a disordered region. Transmembrane regions (beta stranded) follow at residues 214-227 (ESQL…AFKA), 234-243 (VNFGAISEGK), 312-321 (STKVKAAFDA), and 329-341 (SGDV…IKNS). The short motif at 483–493 (ECTGLAWEWWR) is the Conserved undecapeptide element. A Cholesterol binding motif is present at residues 515 to 516 (TL).

The protein belongs to the cholesterol-dependent cytolysin family. In terms of assembly, homooligomeric pore complex of 35 to 50 subunits; when inserted in the host membrane.

The protein resides in the secreted. The protein localises to the host membrane. It localises to the host cell membrane. Its activity is regulated as follows. Activity of listeriolysin O is regulated on multiple levels. It should be high in the phagosome, thereby allowing escape of the bacteria from the phagosomal compartment. Then, once inside the host cytosol, the activity must be controlled to prevent lysis of the host plasma membrane and loss of the intracellular environment. Functionally, a cholesterol-dependent toxin that causes cytolysis by forming pores in cholesterol containing host membranes. After binding to target membranes, the protein undergoes a major conformation change, leading to its insertion in the host membrane and formation of an oligomeric pore complex. Cholesterol is required for binding to host membranes, membrane insertion and pore formation; cholesterol binding is mediated by a Thr-Leu pair in the C-terminus. Acts as a major virulence factor required for the escape of bacteria from phagosomal vacuoles and entry into the host cytosol. Can be reversibly inactivated by oxidation. This chain is Listeriolysin O (hly), found in Listeria monocytogenes serotype 1/2a (strain 08-5578).